The chain runs to 360 residues: Phospho-N-acetylmuramoyl-pentapeptide-transferase (360 aa).

The next 10 membrane-spanning stretches (helical) occupy residues 27–47, 70–90, 98–118, 134–154, 168–188, 199–219, 239–259, 263–283, 288–308, and 337–357; these read GALFTAGFFVFWFGPWIISLL, GTPTMGGLMILAGAVVSILLW, VWVTLAVTLGFGAIGFYDDYL, LLLEFAIAGAACLLISIYSPA, ALLNLGWFWVPFAAFVIVGAG, GLAIVPVMIACGTFGVIAYLV, LAVVCGAVIGAGLGFLWFNAP, IFMGDTGSLALGGLLGAIAVA, IVLAIVGGLFVLEIMSVIIQV, and QVVIRFWIIAVILALVGLATL.

The protein belongs to the glycosyltransferase 4 family. MraY subfamily. Mg(2+) serves as cofactor.

The protein localises to the cell inner membrane. It catalyses the reaction UDP-N-acetyl-alpha-D-muramoyl-L-alanyl-gamma-D-glutamyl-meso-2,6-diaminopimeloyl-D-alanyl-D-alanine + di-trans,octa-cis-undecaprenyl phosphate = di-trans,octa-cis-undecaprenyl diphospho-N-acetyl-alpha-D-muramoyl-L-alanyl-D-glutamyl-meso-2,6-diaminopimeloyl-D-alanyl-D-alanine + UMP. Its pathway is cell wall biogenesis; peptidoglycan biosynthesis. Its function is as follows. Catalyzes the initial step of the lipid cycle reactions in the biosynthesis of the cell wall peptidoglycan: transfers peptidoglycan precursor phospho-MurNAc-pentapeptide from UDP-MurNAc-pentapeptide onto the lipid carrier undecaprenyl phosphate, yielding undecaprenyl-pyrophosphoryl-MurNAc-pentapeptide, known as lipid I. This chain is Phospho-N-acetylmuramoyl-pentapeptide-transferase, found in Methylorubrum populi (strain ATCC BAA-705 / NCIMB 13946 / BJ001) (Methylobacterium populi).